A 138-amino-acid polypeptide reads, in one-letter code: Putative thioredoxin-like protein 453L (138 aa).

One can recognise a Thioredoxin domain in the interval 3-138 (QQKYFEKPVY…FNNIVNYVMG (136 aa)). Catalysis depends on nucleophile residues C44 and C47. C44 and C47 are oxidised to a cystine.

This sequence belongs to the thioredoxin family.

In terms of biological role, participates in various redox reactions through the reversible oxidation of its active center dithiol to a disulfide and catalyzes dithiol-disulfide exchange reactions. The protein is Putative thioredoxin-like protein 453L of Acheta domesticus (House cricket).